A 504-amino-acid polypeptide reads, in one-letter code: Glycerol kinase (504 aa).

Thr-12 serves as a coordination point for ADP. Thr-12, Thr-13, and Ser-14 together coordinate ATP. A sn-glycerol 3-phosphate-binding site is contributed by Thr-12. Arg-16 provides a ligand contact to ADP. Sn-glycerol 3-phosphate is bound by residues Arg-82, Glu-83, Tyr-134, and Asp-246. Glycerol-binding residues include Arg-82, Glu-83, Tyr-134, Asp-246, and Gln-247. ADP contacts are provided by Thr-268 and Gly-312. Residues Thr-268, Gly-312, Gln-316, and Gly-413 each coordinate ATP. ADP-binding residues include Gly-413 and Asn-417.

The protein belongs to the FGGY kinase family.

It carries out the reaction glycerol + ATP = sn-glycerol 3-phosphate + ADP + H(+). The protein operates within polyol metabolism; glycerol degradation via glycerol kinase pathway; sn-glycerol 3-phosphate from glycerol: step 1/1. With respect to regulation, inhibited by fructose 1,6-bisphosphate (FBP). Functionally, key enzyme in the regulation of glycerol uptake and metabolism. Catalyzes the phosphorylation of glycerol to yield sn-glycerol 3-phosphate. The polypeptide is Glycerol kinase (Renibacterium salmoninarum (strain ATCC 33209 / DSM 20767 / JCM 11484 / NBRC 15589 / NCIMB 2235)).